Here is a 1294-residue protein sequence, read N- to C-terminus: uncharacterized protein (1294 aa).

Over 1–375 (MSQQENGDVA…RNFKLNFSDY (375 aa)) the chain is Extracellular. In terms of domain architecture, ABC transporter 1 spans 28–287 (LHVRDLSIVA…FESIGYHVPQ (260 aa)). Residue N41 is glycosylated (N-linked (GlcNAc...) asparagine). 62-69 (GGSGSGKT) contacts ATP. 6 N-linked (GlcNAc...) asparagine glycosylation sites follow: N86, N101, N151, N341, N349, and N371. Residues 376-396 (VTLISTFAEPLIIGTVCGWIY) traverse the membrane as a helical segment. Over 397 to 495 (YKPDKSSIGG…EADARKFFYQ (99 aa)) the chain is Cytoplasmic. A helical transmembrane segment spans residues 496-516 (FAVVFLCQLSCSGLSMLSVAV). The Extracellular segment spans residues 517–530 (SRDFSKASLVGNMT). An N-linked (GlcNAc...) asparagine glycan is attached at N528. The chain crosses the membrane as a helical span at residues 531-551 (FTVLSMGCGFFVNAKVMPVYV). Over 552–604 (RWIKYIAFTWYSFGTLMSSTFTNSYCTTDNLDECLGNQILEVYGFPRNWITVP) the chain is Cytoplasmic. A helical membrane pass occupies residues 605–625 (AVVLLCWSVGYFVVGAIILYL). At 626–1038 (HKIDITLQNE…TTTRRSFDSL (413 aa)) the chain is on the extracellular side. The 263-residue stretch at 679–941 (IKLEDIDLRV…FTELGYNCPS (263 aa)) folds into the ABC transporter 2 domain. Position 727–734 (727–734 (GPSGSGKS)) interacts with ATP. N983 carries N-linked (GlcNAc...) asparagine glycosylation. The helical transmembrane segment at 1039–1059 (MARIAQIPGLGVIFALFFAPV) threads the bilayer. At 1060–1120 (KHNYTSISNR…PFFLAYMTLE (61 aa)) the chain is on the cytoplasmic side. A helical membrane pass occupies residues 1121-1141 (LPLSALASVLYAVFTVLACGL). The Extracellular segment spans residues 1142 to 1266 (PRTAGNFFAT…YGLVRNTQKY (125 aa)). The helical transmembrane segment at 1267-1287 (LGIIVCVAIIYRLIAFFILKA) threads the bilayer. The Cytoplasmic portion of the chain corresponds to 1288–1294 (KLEWIKW).

The protein belongs to the ABC transporter superfamily. ABCG family. PDR (TC 3.A.1.205) subfamily.

It is found in the membrane. This is an uncharacterized protein from Saccharomyces cerevisiae (strain ATCC 204508 / S288c) (Baker's yeast).